A 371-amino-acid chain; its full sequence is D-alanine--D-alanine ligase (371 aa).

Positions lysine 154–aspartate 361 constitute an ATP-grasp domain. Arginine 182–glutamate 237 is an ATP binding site. Residues aspartate 316, glutamate 328, and asparagine 330 each coordinate Mg(2+).

Belongs to the D-alanine--D-alanine ligase family. The cofactor is Mg(2+). Mn(2+) serves as cofactor.

Its subcellular location is the cytoplasm. It catalyses the reaction 2 D-alanine + ATP = D-alanyl-D-alanine + ADP + phosphate + H(+). It participates in cell wall biogenesis; peptidoglycan biosynthesis. In terms of biological role, cell wall formation. This is D-alanine--D-alanine ligase from Mycobacterium sp. (strain JLS).